We begin with the raw amino-acid sequence, 302 residues long: uncharacterized protein (302 aa).

An HTH lysR-type domain is found at 1–60; it reads MRMNMSDFATFFAVARNQSFRAAGDELGLSSSAISHSIKTLEQRLKIRLFNRTTRSVSLT. The segment at residues 20–40 is a DNA-binding region (H-T-H motif); it reads FRAAGDELGLSSSAISHSIKT.

Belongs to the LysR transcriptional regulatory family.

This is an uncharacterized protein from Escherichia coli (strain K12).